A 504-amino-acid polypeptide reads, in one-letter code: Maturase K (504 aa).

This sequence belongs to the intron maturase 2 family. MatK subfamily.

It localises to the plastid. It is found in the chloroplast. Functionally, usually encoded in the trnK tRNA gene intron. Probably assists in splicing its own and other chloroplast group II introns. This chain is Maturase K, found in Guizotia abyssinica (Niger).